A 431-amino-acid polypeptide reads, in one-letter code: Glutamate-1-semialdehyde 2,1-aminomutase (431 aa).

Residue lysine 269 is modified to N6-(pyridoxal phosphate)lysine.

It belongs to the class-III pyridoxal-phosphate-dependent aminotransferase family. HemL subfamily. In terms of assembly, homodimer. Pyridoxal 5'-phosphate serves as cofactor.

The protein localises to the cytoplasm. The catalysed reaction is (S)-4-amino-5-oxopentanoate = 5-aminolevulinate. It participates in porphyrin-containing compound metabolism; protoporphyrin-IX biosynthesis; 5-aminolevulinate from L-glutamyl-tRNA(Glu): step 2/2. It functions in the pathway porphyrin-containing compound metabolism; chlorophyll biosynthesis. This chain is Glutamate-1-semialdehyde 2,1-aminomutase, found in Chlorobaculum tepidum (strain ATCC 49652 / DSM 12025 / NBRC 103806 / TLS) (Chlorobium tepidum).